A 140-amino-acid polypeptide reads, in one-letter code: Ribosome-binding factor A (140 aa).

Basic residues predominate over residues 1-13; that stretch reads MQKKSSSKSHRAT. Positions 1–22 are disordered; it reads MQKKSSSKSHRATRGPSQRQLR.

This sequence belongs to the RbfA family. In terms of assembly, monomer. Binds 30S ribosomal subunits, but not 50S ribosomal subunits or 70S ribosomes.

It localises to the cytoplasm. One of several proteins that assist in the late maturation steps of the functional core of the 30S ribosomal subunit. Associates with free 30S ribosomal subunits (but not with 30S subunits that are part of 70S ribosomes or polysomes). Required for efficient processing of 16S rRNA. May interact with the 5'-terminal helix region of 16S rRNA. This Parvibaculum lavamentivorans (strain DS-1 / DSM 13023 / NCIMB 13966) protein is Ribosome-binding factor A.